The chain runs to 155 residues: Glutamyl-tRNA(Gln) amidotransferase subunit C, chloroplastic/mitochondrial (155 aa).

The transit peptide at 1–52 directs the protein to the chloroplast and mitochondrion; it reads MATRALLAVIYASPNRCYISPSRIKIQSLTCSSSSHYYQRQSRKNHRIARSY.

It belongs to the GatC family. As to quaternary structure, subunit of the heterotrimeric GatCAB amidotransferase (AdT) complex, composed of A, B and C subunits.

Its subcellular location is the mitochondrion. The protein resides in the plastid. The protein localises to the chloroplast. The catalysed reaction is L-glutamyl-tRNA(Gln) + L-glutamine + ATP + H2O = L-glutaminyl-tRNA(Gln) + L-glutamate + ADP + phosphate + H(+). Functionally, allows the formation of correctly charged Gln-tRNA(Gln) through the transamidation of misacylated Glu-tRNA(Gln) in chloroplasts and mitochondria. The reaction takes place in the presence of glutamine and ATP through an activated gamma-phospho-Glu-tRNA(Gln). This is Glutamyl-tRNA(Gln) amidotransferase subunit C, chloroplastic/mitochondrial from Arabidopsis thaliana (Mouse-ear cress).